The primary structure comprises 1297 residues: Phosphoribosylformylglycinamidine synthase (1297 aa).

Residues 303–329 (ISPFPGAATGSGGEIRDEGATGRGAKP) are disordered. Residue 308 to 319 (GAATGSGGEIRD) coordinates ATP. D680, E719, N723, and D887 together coordinate Mg(2+). Residue S889 participates in ATP binding. The Glutamine amidotransferase type-1 domain maps to 1045–1297 (IAILREQGVN…RLFRNARMVF (253 aa)). C1138 functions as the Nucleophile in the catalytic mechanism. Residues H1263 and E1265 contribute to the active site.

The protein in the N-terminal section; belongs to the FGAMS family. As to quaternary structure, monomer.

It localises to the cytoplasm. It catalyses the reaction N(2)-formyl-N(1)-(5-phospho-beta-D-ribosyl)glycinamide + L-glutamine + ATP + H2O = 2-formamido-N(1)-(5-O-phospho-beta-D-ribosyl)acetamidine + L-glutamate + ADP + phosphate + H(+). It participates in purine metabolism; IMP biosynthesis via de novo pathway; 5-amino-1-(5-phospho-D-ribosyl)imidazole from N(2)-formyl-N(1)-(5-phospho-D-ribosyl)glycinamide: step 1/2. Phosphoribosylformylglycinamidine synthase involved in the purines biosynthetic pathway. Catalyzes the ATP-dependent conversion of formylglycinamide ribonucleotide (FGAR) and glutamine to yield formylglycinamidine ribonucleotide (FGAM) and glutamate. This chain is Phosphoribosylformylglycinamidine synthase, found in Haemophilus influenzae (strain 86-028NP).